We begin with the raw amino-acid sequence, 793 residues long: Facilitated trehalose transporter Tret1 (793 aa).

Topologically, residues 1 to 326 are cytoplasmic; it reads MNRKVGPVLE…LEVYRPTTNP (326 aa). Disordered stretches follow at residues 99–148 and 213–235; these read EKAK…EHKS and RHIS…FEPS. Over residues 104–113 the composition is skewed to low complexity; it reads KSSLKSSRVS. The segment covering 115–125 has biased composition (acidic residues); sequence DQEDDRFDEDE. Over residues 213–223 the composition is skewed to basic and acidic residues; sequence RHISFKFDKEP. Residues 327–347 traverse the membrane as a helical segment; sequence IYIWTQVLAALSVSLGSMVVG. Residues 348-376 lie on the Extracellular side of the membrane; that stretch reads FSSAYTSPALVSMKDRNITSFEVTDQSGS. The N-linked (GlcNAc...) asparagine glycan is linked to Asn-364. A helical transmembrane segment spans residues 377–397; it reads WVGGIMPLAGLAGGILGGPMI. The Cytoplasmic portion of the chain corresponds to 398–411; sequence EYLGRKNTILATAT. A helical transmembrane segment spans residues 412-432; it reads PFIISWLLIGCATHVAMVLVG. Topologically, residues 433-434 are extracellular; sequence RA. A helical membrane pass occupies residues 435–455; sequence LSGLCVGIASLSLPVYLGETV. The Cytoplasmic portion of the chain corresponds to 456–460; it reads QPEVR. A helical transmembrane segment spans residues 461 to 481; it reads GTLGLLPTAFGNIGILLCFVA. The Extracellular portion of the chain corresponds to 482–488; the sequence is GKYLDWS. The helical transmembrane segment at 489–509 threads the bilayer; that stretch reads GLAFLGAALPIPFLLLMFLIP. Residues 510–572 are Cytoplasmic-facing; sequence ETPRWYVSRN…DLLNKANLKP (63 aa). The chain crosses the membrane as a helical span at residues 573 to 593; that stretch reads LLISLGLMFFQQLSGINAVIF. At 594–609 the chain is on the extracellular side; that stretch reads YTVQIFQSAGSTIDEK. A helical membrane pass occupies residues 610 to 630; it reads LCTIIVGVVNFIATFIATVLI. Over 631–636 the chain is Cytoplasmic; sequence DRLGRK. The chain crosses the membrane as a helical span at residues 637-657; that stretch reads ILLYISDVAMIITLMTLGTFF. The Extracellular segment spans residues 658-668; that stretch reads YMKNNGDDVSE. Residues 669–689 traverse the membrane as a helical segment; it reads IGWLPLAAFVVFVVGFSLGFG. Topologically, residues 690-703 are cytoplasmic; the sequence is PIPWLMMGEILPGK. A helical membrane pass occupies residues 704–724; sequence IRGSAASVATAFNWSCTFVVT. The Extracellular segment spans residues 725–737; it reads KTFADITASIGNH. The helical transmembrane segment at 738 to 758 threads the bilayer; sequence GAFWMFGSICIVGLLFVIVYV. Residues 759–793 lie on the Cytoplasmic side of the membrane; that stretch reads PETQGKSLEDIERKMMGRVRRMSSVANIKPLSFNM.

Belongs to the major facilitator superfamily. Sugar transporter (TC 2.A.1.1) family. Trehalose transporter subfamily.

It is found in the cell membrane. High-capacity facilitative transporter for trehalose. Does not transport maltose, sucrose or lactose. Mediates the bidirectional transfer of trehalose. Responsible for the transport of trehalose synthesized in the fat body and the incorporation of trehalose into other tissues that require a carbon source, thereby regulating trehalose levels in the hemolymph. This chain is Facilitated trehalose transporter Tret1, found in Anopheles gambiae (African malaria mosquito).